Reading from the N-terminus, the 479-residue chain is Glutamyl-tRNA(Gln) amidotransferase subunit A (479 aa).

Catalysis depends on charge relay system residues Lys71 and Ser146. The Acyl-ester intermediate role is filled by Ser170.

It belongs to the amidase family. GatA subfamily. In terms of assembly, heterotrimer of A, B and C subunits.

The catalysed reaction is L-glutamyl-tRNA(Gln) + L-glutamine + ATP + H2O = L-glutaminyl-tRNA(Gln) + L-glutamate + ADP + phosphate + H(+). In terms of biological role, allows the formation of correctly charged Gln-tRNA(Gln) through the transamidation of misacylated Glu-tRNA(Gln) in organisms which lack glutaminyl-tRNA synthetase. The reaction takes place in the presence of glutamine and ATP through an activated gamma-phospho-Glu-tRNA(Gln). This is Glutamyl-tRNA(Gln) amidotransferase subunit A from Lactobacillus gasseri (strain ATCC 33323 / DSM 20243 / BCRC 14619 / CIP 102991 / JCM 1131 / KCTC 3163 / NCIMB 11718 / NCTC 13722 / AM63).